A 49-amino-acid chain; its full sequence is YLDHGLGAPAPYVDPLEPKREVCELNPDCDELADQMGFQEAYRRFYGTT.

Positions 1–47 (YLDHGLGAPAPYVDPLEPKREVCELNPDCDELADQMGFQEAYRRFYG) constitute a Gla domain. At P9 the chain carries 4-hydroxyproline. Residues E17, E21, E24, and D30 each contribute to the Ca(2+) site. A 4-carboxyglutamate mark is found at E17, E21, and E24. A disulfide bond links C23 and C29.

The protein belongs to the osteocalcin/matrix Gla protein family. Post-translationally, gamma-carboxyglutamic acid residues are formed by vitamin K dependent carboxylation. These residues are essential for the binding of calcium.

It is found in the secreted. Its function is as follows. The carboxylated form is one of the main organic components of the bone matrix, which constitutes 1-2% of the total bone protein: it acts as a negative regulator of bone formation and is required to limit bone formation without impairing bone resorption or mineralization. The carboxylated form binds strongly to apatite and calcium. Functionally, the uncarboxylated form acts as a hormone secreted by osteoblasts, which regulates different cellular processes, such as energy metabolism, male fertility and brain development. Regulates of energy metabolism by acting as a hormone favoring pancreatic beta-cell proliferation, insulin secretion and sensitivity and energy expenditure. Uncarboxylated osteocalcin hormone also promotes testosterone production in the testes: acts as a ligand for G protein-coupled receptor GPRC6A at the surface of Leydig cells, initiating a signaling response that promotes the expression of enzymes required for testosterone synthesis in a CREB-dependent manner. Also acts as a regulator of brain development: osteocalcin hormone crosses the blood-brain barrier and acts as a ligand for GPR158 on neurons, initiating a signaling response that prevents neuronal apoptosis in the hippocampus, favors the synthesis of all monoamine neurotransmitters and inhibits that of gamma-aminobutyric acid (GABA). Osteocalcin also crosses the placenta during pregnancy and maternal osteocalcin is required for fetal brain development. The protein is Osteocalcin of Lama guanicoe (Guanaco).